A 488-amino-acid polypeptide reads, in one-letter code: Transmembrane protein 39A (488 aa).

Residues N31 and N39 are each glycosylated (N-linked (GlcNAc...) asparagine). 3 helical membrane-spanning segments follow: residues 72–92 (GLLF…IQYI), 110–130 (TSLN…VMLA), and 155–175 (LITA…WTLV). N-linked (GlcNAc...) asparagine glycosylation is present at N180. 5 helical membrane passes run 182–202 (SVLN…LCCF), 287–307 (EVLF…LCFV), 319–339 (CEHL…QLLP), 420–440 (LLNL…YSLL), and 446–466 (NHTL…FKLL).

The protein belongs to the TMEM39 family.

It localises to the endoplasmic reticulum membrane. In terms of biological role, regulates autophagy by controlling the spatial distribution and levels of the intracellular phosphatidylinositol 4-phosphate (PtdIns(4)P) pools. Modulates (PtdIns(4)P) levels by regulating the ER-to-Golgi trafficking of the phosphatidylinositide phosphatase SACM1L. The sequence is that of Transmembrane protein 39A (tmem39a) from Xenopus tropicalis (Western clawed frog).